We begin with the raw amino-acid sequence, 839 residues long: Autophagy-related protein 9A (839 aa).

Ala-2 is modified (N-acetylalanine). Residues 2–61 (AQFDTEYQRLEASYSDSPPGEEDLLVHVAEGSKSPWHHIENLDLFFSRVYNLHQKNGFTC) are Cytoplasmic-facing. The Tyrosine-based sorting signal motif lies at 8 to 11 (YQRL). A phosphoserine mark is found at Ser-14, Ser-16, and Ser-18. A helical membrane pass occupies residues 62 to 84 (MLIGEMFELMQFLFVVAFTTFLV). Residues 85–128 (SCVDYDILFANKMVNHSLHPTEPVKVTLPDAFLPAQVCSARIQE) lie on the Lumenal side of the membrane. Residue Asn-99 is glycosylated (N-linked (GlcNAc...) asparagine). The chain crosses the membrane as a helical span at residues 129–154 (NGSLITILVIAGVFWIHRLIKFIYNI). The Cytoplasmic portion of the chain corresponds to 155–290 (CCYWEIHSFY…ELAQRLSNRI (136 aa)). An intramembrane segment occupies 291–301 (LWIGIANFLLC). Residues 302-319 (PLILIWQILYAFFSYAEV) are Cytoplasmic-facing. The stretch at 320–328 (LKREPGALG) is an intramembrane region. Residues 329-371 (ARCWSLYGRCYLRHFNELEHELQSRLNRGYKPASKYMNCFLSP) are Cytoplasmic-facing. Residues 372–397 (LLTLLAKNGAFFAGSILAVLIALTIY) form a helical membrane-spanning segment. Residues 398-406 (DEDVLAVEH) are Lumenal-facing. A helical transmembrane segment spans residues 407–424 (VLTTVTLLGVTVTVCRSF). Over 425 to 470 (IPDQHMVFCPEQLLRVILAHIHYMPDHWQGNAHRSQTRDEFAQLFQ) the chain is Cytoplasmic. Residues 471–480 (YKAVFILEEL) lie within the membrane without spanning it. Residues 481–483 (LSP) are Cytoplasmic-facing. An intramembrane segment occupies 484–492 (IVTPLILIF). Over 493-839 (CLRPRALEII…DELPPQVHKV (347 aa)) the chain is Cytoplasmic. Ser-656 is subject to Phosphoserine. 2 disordered regions span residues 657 to 686 (PLQPGAAPQGRVPSTMTGSGVDARTASSGS) and 717 to 839 (HKQQ…VHKV). Residues 724–736 (EPERHVWHRRESD) are compositionally biased toward basic and acidic residues. Phosphoserine occurs at positions 735, 738, 741, and 828. Acidic residues-rich tracts occupy residues 737 to 747 (ESGESAPEEGG) and 823 to 832 (VPEEGSEDEL).

It belongs to the ATG9 family. In terms of assembly, homotrimer; forms a homotrimer with a central pore that forms a path between the two membrane leaflets. Interacts (via cytoplasmic its C-terminus) with ATG2A. Interacts with SUPT20H. Interacts (via the tyrosine-based sorting signal motif) with AP4M1; promoting association with the AP-4 complex. Interacts with ARFIP1 and ARFIP2. Interacts with ATG4A; the interaction is direct and promotes ATG9A trafficking. In terms of processing, ufmylated in a DDRGK1 dependent manner.

It localises to the preautophagosomal structure membrane. Its subcellular location is the cytoplasmic vesicle. It is found in the autophagosome membrane. The protein localises to the golgi apparatus. The protein resides in the trans-Golgi network membrane. It localises to the late endosome membrane. Its subcellular location is the recycling endosome membrane. It is found in the endoplasmic reticulum membrane. The protein localises to the mitochondrion membrane. It carries out the reaction a 1,2-diacyl-sn-glycero-3-phosphocholine(in) = a 1,2-diacyl-sn-glycero-3-phosphocholine(out). The enzyme catalyses a 1,2-diacyl-sn-glycero-3-phospho-L-serine(in) = a 1,2-diacyl-sn-glycero-3-phospho-L-serine(out). It catalyses the reaction a 1,2-diacyl-sn-glycero-3-phosphoethanolamine(in) = a 1,2-diacyl-sn-glycero-3-phosphoethanolamine(out). In terms of biological role, phospholipid scramblase involved in autophagy by mediating autophagosomal membrane expansion. Cycles between the preautophagosomal structure/phagophore assembly site (PAS) and the cytoplasmic vesicle pool and supplies membrane for the growing autophagosome. Lipid scramblase activity plays a key role in preautophagosomal structure/phagophore assembly by distributing the phospholipids that arrive through ATG2 (ATG2A or ATG2B) from the cytoplasmic to the luminal leaflet of the bilayer, thereby driving autophagosomal membrane expansion. Also required to supply phosphatidylinositol 4-phosphate to the autophagosome initiation site by recruiting the phosphatidylinositol 4-kinase beta (PI4KB) in a process dependent on ARFIP2, but not ARFIP1. In addition to autophagy, also plays a role in necrotic cell death. The polypeptide is Autophagy-related protein 9A (Mus musculus (Mouse)).